We begin with the raw amino-acid sequence, 459 residues long: MSKIVVVGANHAGTACINTMLDNFGNENEIVVFDQNSNISFLGCGMALWIGEQIDGAEGLFYSDKEKLEAKGAKVYMNSPVLSIDYDAKVVTAEVEGKEHKESYEKLIFATGSTPILPPIEGVEIVKGNREFKATLENVQFVKLYQNAEEVINKLSDKSQHLDRIAVVGGGYIGVELAEAFERLGKEVVLVDIVDTVLNGYYDKDFTQMMAKNLEDHNIRLALGQTVKAIEGDGKVERLITDKESFDVDMVILAVGFRPNTALADGKIELFRNGAFLVDKKQETSIPGVYAVGDCATVYDNARKDTSYIALASNAVRTGIVGAYNACGHELEGIGVQGSNGISIYGLHMVSTGLTLEKAKAAGYNATETGFNDLQKPEFMKHDNHEVAIKIVFDKDSREILGAQMVSHDIAISMGIHMFSLAIQEHVTIDKLALTDLFFLPHFNKPYNYITMAALTAEK.

N10 contributes to the FAD binding site. The active-site Proton acceptor is H11. Positions 12, 34, 35, 44, 81, 110, 113, 143, and 172 each coordinate FAD. C44 serves as the catalytic Redox-active. Residue C44 is modified to Cysteine sulfinic acid (-SO2H). NAD(+) contacts are provided by I173, D192, Y201, and G256. Residue D294 participates in FAD binding. A310 serves as a coordination point for NAD(+). Residues L311, A312, and S313 each coordinate FAD. NAD(+) is bound at residue G341. Residue F439 coordinates FAD.

The protein belongs to the class-III pyridine nucleotide-disulfide oxidoreductase family. FAD serves as cofactor.

It is found in the secreted. The protein resides in the cell wall. It catalyses the reaction 2 NADH + O2 + 2 H(+) = 2 NAD(+) + 2 H2O. Catalyzes the four-electron reduction of molecular oxygen to water. Plays a role in redox balance maintenance. May be involved in mediating bacterial adhesion to host cells. May be considered a potential virulence factor. This is NADH oxidase from Streptococcus pneumoniae (strain ATCC BAA-255 / R6).